The sequence spans 261 residues: Cytochrome c oxidase subunit 3 (261 aa).

Over 1 to 15 the chain is Mitochondrial matrix; sequence MTHQTHAYHMVNPSP. The helical transmembrane segment at 16 to 34 threads the bilayer; sequence WPLTGALSALLMTSGLIMW. At 35–40 the chain is on the mitochondrial intermembrane side; sequence FHFNST. A helical membrane pass occupies residues 41 to 66; sequence TLLMLGLTTNMLTMYQWWRDVIREST. Residues 67–72 are Mitochondrial matrix-facing; it reads FQGHHT. The chain crosses the membrane as a helical span at residues 73–105; it reads PNVQKGLRYGMILFIISEVLFFTGFFWAFYHSS. Topologically, residues 106-128 are mitochondrial intermembrane; it reads LAPTPELGGCWPPTGINPLNPLE. Residues 129 to 152 traverse the membrane as a helical segment; the sequence is VPLLNTSVLLASGVSITWAHHSLM. Topologically, residues 153–155 are mitochondrial matrix; it reads EGN. A helical transmembrane segment spans residues 156–183; sequence RNHMLQALFITIALGVYFTLLQASEYYE. Residues 184 to 190 lie on the Mitochondrial intermembrane side of the membrane; the sequence is APFTISD. A helical membrane pass occupies residues 191–223; that stretch reads GVYGSTFFVATGFHGLHVIIGSTFLIVCFFRQL. At 224–232 the chain is on the mitochondrial matrix side; that stretch reads KFHFTSNHH. Residues 233–256 traverse the membrane as a helical segment; that stretch reads FGFEAAAWYWHFVDVVWLFLYVSI. Residues 257–261 lie on the Mitochondrial intermembrane side of the membrane; it reads YWWGS.

This sequence belongs to the cytochrome c oxidase subunit 3 family. As to quaternary structure, component of the cytochrome c oxidase (complex IV, CIV), a multisubunit enzyme composed of 14 subunits. The complex is composed of a catalytic core of 3 subunits MT-CO1, MT-CO2 and MT-CO3, encoded in the mitochondrial DNA, and 11 supernumerary subunits COX4I, COX5A, COX5B, COX6A, COX6B, COX6C, COX7A, COX7B, COX7C, COX8 and NDUFA4, which are encoded in the nuclear genome. The complex exists as a monomer or a dimer and forms supercomplexes (SCs) in the inner mitochondrial membrane with NADH-ubiquinone oxidoreductase (complex I, CI) and ubiquinol-cytochrome c oxidoreductase (cytochrome b-c1 complex, complex III, CIII), resulting in different assemblies (supercomplex SCI(1)III(2)IV(1) and megacomplex MCI(2)III(2)IV(2)).

Its subcellular location is the mitochondrion inner membrane. The catalysed reaction is 4 Fe(II)-[cytochrome c] + O2 + 8 H(+)(in) = 4 Fe(III)-[cytochrome c] + 2 H2O + 4 H(+)(out). Functionally, component of the cytochrome c oxidase, the last enzyme in the mitochondrial electron transport chain which drives oxidative phosphorylation. The respiratory chain contains 3 multisubunit complexes succinate dehydrogenase (complex II, CII), ubiquinol-cytochrome c oxidoreductase (cytochrome b-c1 complex, complex III, CIII) and cytochrome c oxidase (complex IV, CIV), that cooperate to transfer electrons derived from NADH and succinate to molecular oxygen, creating an electrochemical gradient over the inner membrane that drives transmembrane transport and the ATP synthase. Cytochrome c oxidase is the component of the respiratory chain that catalyzes the reduction of oxygen to water. Electrons originating from reduced cytochrome c in the intermembrane space (IMS) are transferred via the dinuclear copper A center (CU(A)) of subunit 2 and heme A of subunit 1 to the active site in subunit 1, a binuclear center (BNC) formed by heme A3 and copper B (CU(B)). The BNC reduces molecular oxygen to 2 water molecules using 4 electrons from cytochrome c in the IMS and 4 protons from the mitochondrial matrix. This chain is Cytochrome c oxidase subunit 3 (MT-CO3), found in Gazella subgutturosa (Goitred gazelle).